A 459-amino-acid chain; its full sequence is ATP synthase subunit beta (459 aa).

Residue glycine 149 to threonine 156 participates in ATP binding.

The protein belongs to the ATPase alpha/beta chains family. F-type ATPases have 2 components, CF(1) - the catalytic core - and CF(0) - the membrane proton channel. CF(1) has five subunits: alpha(3), beta(3), gamma(1), delta(1), epsilon(1). CF(0) has three main subunits: a(1), b(2) and c(9-12). The alpha and beta chains form an alternating ring which encloses part of the gamma chain. CF(1) is attached to CF(0) by a central stalk formed by the gamma and epsilon chains, while a peripheral stalk is formed by the delta and b chains.

It is found in the cell inner membrane. The catalysed reaction is ATP + H2O + 4 H(+)(in) = ADP + phosphate + 5 H(+)(out). Functionally, produces ATP from ADP in the presence of a proton gradient across the membrane. The catalytic sites are hosted primarily by the beta subunits. The chain is ATP synthase subunit beta from Pseudomonas syringae pv. tomato (strain ATCC BAA-871 / DC3000).